Here is a 760-residue protein sequence, read N- to C-terminus: Exostosin-1 (760 aa).

Topologically, residues 1–6 are cytoplasmic; it reads MQAKKR. The chain crosses the membrane as a helical; Signal-anchor for type II membrane protein span at residues 7 to 25; that stretch reads YILVFVSCAFLAYAYFGGY. The Lumenal portion of the chain corresponds to 26–760; the sequence is RLKVSPLRPR…KYRQIELVGS (735 aa). Residues N71 and N327 are each glycosylated (N-linked (GlcNAc...) asparagine). R437 contacts UDP-N-acetyl-alpha-D-glucosamine. The N-linked (GlcNAc...) asparagine glycan is linked to N476. Positions 540–560 are disordered; sequence LGGSTRSQGAGPTSQTTEGRP. Polar residues predominate over residues 541 to 560; that stretch reads GGSTRSQGAGPTSQTTEGRP. 7 residues coordinate UDP-N-acetyl-alpha-D-glucosamine: R565, D581, E582, D583, E669, D670, and R713. D583 is a binding site for Mn(2+). Residues C668 and C716 are joined by a disulfide bond. The active site involves D670.

It belongs to the glycosyltransferase 47 family. Interacts with sau. The cofactor is Mn(2+). In terms of tissue distribution, ubiquitously expressed in early embryos. Later (in stage 10 embryos), it is expressed at higher level in the nervous system. Ubiquitously expressed in wing imaginal disk.

It is found in the endoplasmic reticulum membrane. The protein resides in the golgi apparatus membrane. It carries out the reaction 3-O-{[(1-&gt;4)-beta-D-GlcA-(1-&gt;4)-alpha-D-GlcNAc](n)-(1-&gt;4)-beta-D-GlcA-(1-&gt;3)-beta-D-Gal-(1-&gt;3)-beta-D-Gal-(1-&gt;4)-beta-D-Xyl}-L-seryl-[protein] + UDP-N-acetyl-alpha-D-glucosamine = 3-O-{alpha-D-GlcNAc-[(1-&gt;4)-beta-D-GlcA-(1-&gt;4)-alpha-D-GlcNAc](n)-(1-&gt;4)-beta-D-GlcA-(1-&gt;3)-beta-D-Gal-(1-&gt;3)-beta-D-Gal-(1-&gt;4)-beta-D-Xyl}-L-seryl-[protein] + UDP + H(+). The catalysed reaction is 3-O-{alpha-D-GlcNAc-[(1-&gt;4)-beta-D-GlcA-(1-&gt;4)-alpha-D-GlcNAc](n)-(1-&gt;4)-beta-D-GlcA-(1-&gt;3)-beta-D-Gal-(1-&gt;3)-beta-D-Gal-(1-&gt;4)-beta-D-Xyl}-L-seryl-[protein] + UDP-alpha-D-glucuronate = 3-O-{[(1-&gt;4)-beta-D-GlcA-(1-&gt;4)-alpha-D-GlcNAc](n+1)-(1-&gt;4)-beta-D-GlcA-(1-&gt;3)-beta-D-Gal-(1-&gt;3)-beta-D-Gal-(1-&gt;4)-beta-D-Xyl}-L-seryl-[protein] + UDP + H(+). Its pathway is protein modification; protein glycosylation. It participates in glycan metabolism; heparan sulfate biosynthesis. The protein operates within glycan metabolism; heparin biosynthesis. In terms of biological role, glycosyltransferase required for the biosynthesis of heparan-sulfate and responsible for the alternating addition of beta-1-4-linked glucuronic acid (GlcA) and alpha-1-4-linked N-acetylglucosamine (GlcNAc) units to nascent heparan sulfate chains. Botv is the trigger of heparan sulfate chain initiation and polymerization takes place by a complex of ttv and sotv. Plays a central role in the diffusion of morphogens hedgehog (hh), wingless (wg) and decapentaplegic (dpp) via its role in heparan sulfate proteoglycans (HSPGs) biosynthesis which are required for movement of hh, dpp and wg morphogens. The protein is Exostosin-1 (ttv) of Drosophila melanogaster (Fruit fly).